A 168-amino-acid chain; its full sequence is Segregation and condensation protein B (168 aa).

Belongs to the ScpB family. Homodimer. Homodimerization may be required to stabilize the binding of ScpA to the Smc head domains. Component of a cohesin-like complex composed of ScpA, ScpB and the Smc homodimer, in which ScpA and ScpB bind to the head domain of Smc. The presence of the three proteins is required for the association of the complex with DNA.

It localises to the cytoplasm. In terms of biological role, participates in chromosomal partition during cell division. May act via the formation of a condensin-like complex containing Smc and ScpA that pull DNA away from mid-cell into both cell halves. In Caldanaerobacter subterraneus subsp. tengcongensis (strain DSM 15242 / JCM 11007 / NBRC 100824 / MB4) (Thermoanaerobacter tengcongensis), this protein is Segregation and condensation protein B.